The primary structure comprises 396 residues: NADH-quinone oxidoreductase subunit D 1 (396 aa).

It belongs to the complex I 49 kDa subunit family. As to quaternary structure, NDH-1 is composed of 14 different subunits. Subunits NuoB, C, D, E, F, and G constitute the peripheral sector of the complex.

Its subcellular location is the cell inner membrane. The enzyme catalyses a quinone + NADH + 5 H(+)(in) = a quinol + NAD(+) + 4 H(+)(out). NDH-1 shuttles electrons from NADH, via FMN and iron-sulfur (Fe-S) centers, to quinones in the respiratory chain. The immediate electron acceptor for the enzyme in this species is believed to be ubiquinone. Couples the redox reaction to proton translocation (for every two electrons transferred, four hydrogen ions are translocated across the cytoplasmic membrane), and thus conserves the redox energy in a proton gradient. The protein is NADH-quinone oxidoreductase subunit D 1 of Sinorhizobium medicae (strain WSM419) (Ensifer medicae).